The following is a 363-amino-acid chain: Trichothecene biosynthesis protein 14 (363 aa).

It belongs to the TRI14 family.

Functionally, part of the gene cluster that mediates the production of the antimicrobial trichothecene harzianum A (HA) that plays a role in Botrytis cinerea antagonistic activity and plant defense priming. The biosynthesis of harzianum A begins with the cyclization of farnesyl diphosphate to trichodiene and is catalyzed by the trichodiene synthase TRI5. Trichodiene undergoes a series of oxygenations catalyzed by the cytochrome P450 monooxygenase TRI4. TRI4 controls the addition of 3 oxygens at C-2, C-11, and the C-12, C-13-epoxide to form the intermediate isotrichodiol. Isotrichodiol then undergoes a non-enzymatic isomerization and cyclization to form 12,13-epoxytrichothec-9-ene (EPT) which is further converted to trichodermol by the cytochrome P450 monooxygenase TRI11 via C-4 hydroxylation. The last step of HA synthesis is esterification of an octatriendioyl moiety to the C-4 oxygen of trichodermol. The octatriendioyl moiety is probably produced by the polyketide synthase TRI17 and the esterification performed by the trichothecene O-acetyltransferase TRI3. This Trichoderma arundinaceum protein is Trichothecene biosynthesis protein 14.